Here is a 236-residue protein sequence, read N- to C-terminus: Aminopyrimidine aminohydrolase (236 aa).

D44 is a binding site for substrate. C135 (nucleophile) is an active-site residue. Positions 139 and 163 each coordinate substrate. E205 serves as the catalytic Proton donor.

Belongs to the TenA family. As to quaternary structure, homotetramer.

The catalysed reaction is 4-amino-5-aminomethyl-2-methylpyrimidine + H2O = 4-amino-5-hydroxymethyl-2-methylpyrimidine + NH4(+). The enzyme catalyses thiamine + H2O = 5-(2-hydroxyethyl)-4-methylthiazole + 4-amino-5-hydroxymethyl-2-methylpyrimidine + H(+). The protein operates within cofactor biosynthesis; thiamine diphosphate biosynthesis. Catalyzes an amino-pyrimidine hydrolysis reaction at the C5' of the pyrimidine moiety of thiamine compounds, a reaction that is part of a thiamine salvage pathway. Thus, catalyzes the conversion of 4-amino-5-aminomethyl-2-methylpyrimidine to 4-amino-5-hydroxymethyl-2-methylpyrimidine (HMP). To a lesser extent, is also able to catalyze the hydrolytic cleavage of thiamine; however, this thiaminase activity is unlikely to be physiologically relevant. Therefore, is involved in the regeneration of the thiamine pyrimidine from thiamine degraded products present in the environment, rather than in thiamine degradation. The polypeptide is Aminopyrimidine aminohydrolase (Bacillus subtilis (strain 168)).